A 382-amino-acid chain; its full sequence is uncharacterized protein (382 aa).

12 consecutive transmembrane segments (helical) span residues 14-34, 45-65, 75-95, 102-122, 131-151, 157-177, 204-224, 231-251, 270-290, 291-311, 325-345, and 349-369; these read GLLL…LWLA, MVSS…GYLI, YLAS…VGFW, FIAG…LMCS, LLAA…LLVS, LLHV…PLLF, LGVN…GLMP, GMAN…GILG, VQVF…AMAP, ALFI…AWAC, ALLL…AMLM, and SDNL…LMLL.

The protein belongs to the major facilitator superfamily. YcaD (TC 2.A.1.26) family.

It is found in the cell inner membrane. This is an uncharacterized protein from Salmonella paratyphi A (strain ATCC 9150 / SARB42).